The chain runs to 502 residues: Zinc finger C3HC-type protein 1 (502 aa).

Ala2 carries the post-translational modification N-acetylalanine. Phosphoserine is present on Ser24. Thr28 carries the phosphothreonine modification. The disordered stretch occupies residues Ile36–Thr73. Residues Thr52–Ser72 show a composition bias toward polar residues. Phosphoserine occurs at positions 58 and 62. Residue Thr84 is modified to Phosphothreonine. The C3HC-type zinc finger occupies Cys102–Cys156. Residues Leu170–Thr210 are F-box-like. The tract at residues Ser302–Ser423 is disordered. A phosphoserine mark is found at Ser321 and Ser329. The span at Thr327–Ser338 shows a compositional bias: polar residues. Thr333 carries the post-translational modification Phosphothreonine. Residues Ser335, Ser338, Ser344, Ser354, Ser359, and Ser370 each carry the phosphoserine modification. The segment covering Arg351–Pro360 has biased composition (polar residues). A compositionally biased stretch (low complexity) spans Pro371–Arg380. Ser381 is modified (phosphoserine). Residues Thr384 and Thr387 each carry the phosphothreonine modification. Residue Ser395 is modified to Phosphoserine. Residues Pro396–Arg402 carry the Nuclear localization signal motif. Phosphoserine is present on residues Ser407 and Ser483. Low complexity predominate over residues Ser407–Thr422.

In terms of assembly, interacts with TPR; this interaction mediates ZC3HC1 nuclear envelopes (NE)-association but also required for proper positioning of a substantial amount of TPR at the nuclear basket (NB). In terms of processing, phosphorylated. May also be weakly phosphorylated on Tyr residues. As to expression, widely expressed. Highly expressed in heart, skeletal muscle and testis. Expressed in brain, placenta, lung, kidney, liver, pancreas, spleen, thymus, prostate, ovary small intestine and colon. Weakly or not expressed in leukocytes.

Its subcellular location is the nucleus. The protein localises to the nucleus envelope. In terms of biological role, required for proper positioning of a substantial amount of TPR at the nuclear basket (NB) through interaction with TPR. The protein is Zinc finger C3HC-type protein 1 of Homo sapiens (Human).